Reading from the N-terminus, the 63-residue chain is Large ribosomal subunit protein bL35 (63 aa).

This sequence belongs to the bacterial ribosomal protein bL35 family.

This is Large ribosomal subunit protein bL35 from Campylobacter concisus (strain 13826).